An 816-amino-acid polypeptide reads, in one-letter code: S-layer protein (816 aa).

The N-terminal stretch at 1 to 29 (MAKTNSYKKVIAGTMTAAMVAGVVSPVAA) is a signal peptide. SLH domains follow at residues 30–93 (AGKS…DAKP), 94–150 (SFAD…KVNG), and 152–215 (PATK…VAKV). Residues 403 to 480 (FTSKDFKQND…TVKDSKGKEL (78 aa)) enclose the BIG2 domain.

It localises to the secreted. Its subcellular location is the cell wall. It is found in the S-layer. The S-layer is a paracrystalline mono-layered assembly of proteins which coat the surface of bacteria. In Bacillus thuringiensis subsp. finitimus, this protein is S-layer protein.